The primary structure comprises 434 residues: MNSSAKTASAPDSFFTATLAEADPEIAAAIKGELGRQRHEIELIASENIVSRAVLEAQGSVMTNKYAEGYPGARYYGGCEWVDVAETLAIERAKKLFGAQFANVQPNSGSQMNQAVFLALLQPGDTFMGLDLAAGGHLTHGAPVNMSGKWFKAAHYTVRRDDHLIDMDEVARRAEEVKPKLIIAGGSAYSRPWDFKRFREIADSVGAYLMVDMAHFAGLVAGGVHASPVPHAHVTTTTTHKSLRGPRGGLILCNDEALAKKFNSAIFPGLQGGPLMHVIAAKAVAFGEALRPDFKIYAKNVVENAKALAESLRGNGFDIISGGTDNHLMLVDLRPKGLRGNVSEKALVRAAITCNKNGIPFDPEKPFVTSGLRLGTPAATTRGFGVAEFKQVGGLIAEVLNAIAQADDGKAPLVEAAVKEKVKALTNRFPIYQD.

Residues L132 and 136-138 (GHL) contribute to the (6S)-5,6,7,8-tetrahydrofolate site. Position 241 is an N6-(pyridoxal phosphate)lysine (K241).

It belongs to the SHMT family. In terms of assembly, homodimer. Pyridoxal 5'-phosphate is required as a cofactor.

It is found in the cytoplasm. The enzyme catalyses (6R)-5,10-methylene-5,6,7,8-tetrahydrofolate + glycine + H2O = (6S)-5,6,7,8-tetrahydrofolate + L-serine. It functions in the pathway one-carbon metabolism; tetrahydrofolate interconversion. The protein operates within amino-acid biosynthesis; glycine biosynthesis; glycine from L-serine: step 1/1. Catalyzes the reversible interconversion of serine and glycine with tetrahydrofolate (THF) serving as the one-carbon carrier. This reaction serves as the major source of one-carbon groups required for the biosynthesis of purines, thymidylate, methionine, and other important biomolecules. Also exhibits THF-independent aldolase activity toward beta-hydroxyamino acids, producing glycine and aldehydes, via a retro-aldol mechanism. This is Serine hydroxymethyltransferase from Nitrobacter hamburgensis (strain DSM 10229 / NCIMB 13809 / X14).